A 261-amino-acid chain; its full sequence is Segregation and condensation protein A (261 aa).

This sequence belongs to the ScpA family. As to quaternary structure, component of a cohesin-like complex composed of ScpA, ScpB and the Smc homodimer, in which ScpA and ScpB bind to the head domain of Smc. The presence of the three proteins is required for the association of the complex with DNA.

Its subcellular location is the cytoplasm. Participates in chromosomal partition during cell division. May act via the formation of a condensin-like complex containing Smc and ScpB that pull DNA away from mid-cell into both cell halves. This chain is Segregation and condensation protein A, found in Desulfitobacterium hafniense (strain DSM 10664 / DCB-2).